The chain runs to 278 residues: MRFSIVLSSIAALSSVAAAERVCGAIPHRTFAKESKAAIEAATAAGLTTKANITVETYFHVITAGSKGEINNYGPAGIGFKLMDVSRTDNAKWASGGDETGMKKSLRKGGYSALNVYFAPNLEGGLLGFCYFPKANPSANDKLVDGCVILSGSVPGGEAAPYNEGKTTTHEVGHYMGLYHVFNEEQGNCQKDGDMVADTPVQGTKTSGCPQGKDSCPGQGVDSIHNYMDYSDEYVLLSPVYDSWHQTNHRHFSPCMNQFTPGQISRMQMMWQQFRAGK.

The first 19 residues, 1 to 19 (MRFSIVLSSIAALSSVAAA), serve as a signal peptide directing secretion. The N-linked (GlcNAc...) asparagine glycan is linked to N52. H170 provides a ligand contact to Zn(2+). Residue E171 is part of the active site. H174 is a binding site for Zn(2+). C209 and C255 form a disulfide bridge.

It belongs to the peptidase M43B family.

It is found in the secreted. Functionally, secreted metalloproteinase that allows assimilation of proteinaceous substrates. Plays a pivotal role as a pathogenicity determinant during infections and contributes to the ability of the pathogen to persist within the mammalian host. The polypeptide is Extracellular metalloprotease MCYG_03238 (Arthroderma otae (strain ATCC MYA-4605 / CBS 113480) (Microsporum canis)).